A 249-amino-acid chain; its full sequence is Zinc finger AN1 and C2H2 domain-containing stress-associated protein 13 (249 aa).

AN1-type zinc fingers lie at residues 7–55 (PDLG…RGDV) and 95–145 (AVKK…KPES). 16 residues coordinate Zn(2+): Cys-13, Cys-18, Cys-28, Cys-31, Cys-36, His-39, His-45, Cys-47, Cys-101, Cys-106, Cys-118, Cys-121, Cys-126, His-129, His-135, and Cys-137. A disordered region spans residues 194–213 (FASGNDGNSEKTQERNGKQN). A compositionally biased stretch (basic and acidic residues) spans 201–210 (NSEKTQERNG). A C2H2-type zinc finger spans residues 220 to 243 (DVCPKCSRGFRDPVDLLKHIDKDH).

In terms of biological role, may be involved in environmental stress response. This chain is Zinc finger AN1 and C2H2 domain-containing stress-associated protein 13 (SAP13), found in Arabidopsis thaliana (Mouse-ear cress).